The chain runs to 204 residues: V-set and transmembrane domain-containing protein 2-like protein (204 aa).

An N-terminal signal peptide occupies residues 1–24 (MGAPLAVALGALHYLALFLQLGGA). Positions 41 to 158 (ALFTETPHDM…DGKARHHKVK (118 aa)) constitute an Ig-like domain. Cysteines 62 and 142 form a disulfide. A disordered region spans residues 168–204 (NSVLHLPEAPPAAPAPPPPKPGKELRKRSVDQEACSL). Pro residues predominate over residues 175 to 187 (EAPPAAPAPPPPK). The span at 188–198 (PGKELRKRSVD) shows a compositional bias: basic and acidic residues.

The chain is V-set and transmembrane domain-containing protein 2-like protein (VSTM2L) from Homo sapiens (Human).